The following is a 242-amino-acid chain: ATP-dependent dethiobiotin synthetase BioD (242 aa).

12–17 is an ATP binding site; that stretch reads EVGKTV. Threonine 16 contacts Mg(2+). The active site involves lysine 37. Serine 41 contacts substrate. Residues aspartate 51 and 112–115 contribute to the ATP site; that span reads EGAG. Mg(2+) is bound by residues aspartate 51 and glutamate 112.

This sequence belongs to the dethiobiotin synthetase family. As to quaternary structure, homodimer. Requires Mg(2+) as cofactor.

It is found in the cytoplasm. It carries out the reaction (7R,8S)-7,8-diammoniononanoate + CO2 + ATP = (4R,5S)-dethiobiotin + ADP + phosphate + 3 H(+). It participates in cofactor biosynthesis; biotin biosynthesis; biotin from 7,8-diaminononanoate: step 1/2. In terms of biological role, catalyzes a mechanistically unusual reaction, the ATP-dependent insertion of CO2 between the N7 and N8 nitrogen atoms of 7,8-diaminopelargonic acid (DAPA, also called 7,8-diammoniononanoate) to form a ureido ring. In Bacillus cereus (strain B4264), this protein is ATP-dependent dethiobiotin synthetase BioD.